The primary structure comprises 156 residues: Small ribosomal subunit protein uS7 (156 aa).

Belongs to the universal ribosomal protein uS7 family. In terms of assembly, part of the 30S ribosomal subunit. Contacts proteins S9 and S11.

One of the primary rRNA binding proteins, it binds directly to 16S rRNA where it nucleates assembly of the head domain of the 30S subunit. Is located at the subunit interface close to the decoding center, probably blocks exit of the E-site tRNA. The protein is Small ribosomal subunit protein uS7 of Listeria innocua serovar 6a (strain ATCC BAA-680 / CLIP 11262).